Reading from the N-terminus, the 62-residue chain is Large ribosomal subunit protein bL28 (62 aa).

The protein belongs to the bacterial ribosomal protein bL28 family.

The sequence is that of Large ribosomal subunit protein bL28 from Carboxydothermus hydrogenoformans (strain ATCC BAA-161 / DSM 6008 / Z-2901).